The chain runs to 141 residues: Mite group 2 allergen Lep d 2 (141 aa).

Positions 1 to 16 (MMKFIALFALVAVASA) are cleaved as a signal peptide. 3 disulfide bridges follow: Cys-24–Cys-133, Cys-37–Cys-42, and Cys-88–Cys-93. 3 consecutive repeat copies span residues 64–65 (KV), 68–69 (KV), and 72–73 (KV). Residues 64–73 (KVTIKVLAKV) are 3 X 2 AA repeats of K-V.

It belongs to the NPC2 family. Monomer.

It localises to the secreted. The polypeptide is Mite group 2 allergen Lep d 2 (Lepidoglyphus destructor (Storage mite)).